We begin with the raw amino-acid sequence, 120 residues long: Large ribosomal subunit protein uL18 (120 aa).

This sequence belongs to the universal ribosomal protein uL18 family. In terms of assembly, part of the 50S ribosomal subunit; part of the 5S rRNA/L5/L18/L25 subcomplex. Contacts the 5S and 23S rRNAs.

In terms of biological role, this is one of the proteins that bind and probably mediate the attachment of the 5S RNA into the large ribosomal subunit, where it forms part of the central protuberance. This chain is Large ribosomal subunit protein uL18, found in Nitrobacter hamburgensis (strain DSM 10229 / NCIMB 13809 / X14).